The chain runs to 155 residues: Transcriptional repressor NrdR (155 aa).

Residues Met1–Gly22 are disordered. A zinc finger lies at Cys3–Cys34. Over residues Gly7–Gly22 the composition is skewed to basic and acidic residues. The 91-residue stretch at Ile49–Asp139 folds into the ATP-cone domain.

The protein belongs to the NrdR family. The cofactor is Zn(2+).

In terms of biological role, negatively regulates transcription of bacterial ribonucleotide reductase nrd genes and operons by binding to NrdR-boxes. In Phenylobacterium zucineum (strain HLK1), this protein is Transcriptional repressor NrdR.